The following is a 293-amino-acid chain: SAGA-associated factor 29 (293 aa).

Positions 3–88 form a coiled coil; sequence LVSADSRIAE…KALDKIAEIK (86 aa). In terms of domain architecture, SGF29 C-terminal spans 152–293; it reads GDYVARPGDK…VVACKEPKKK (142 aa). Histone H3K4me3 N-terminus binding stretches follow at residues 194 to 196 and 240 to 243; these read DID and QTTC. The tract at residues 264-266 is histone H3K4me3 binding; it reads FED. Lysine 288 is modified (N6-acetyllysine).

Belongs to the SGF29 family. As to quaternary structure, interacts with dimethylated and trimethylated 'Lys-4' of histone H3 (H3K4me2 and H3K4me3), with a preference for the trimethylated form (H3K4me3). Component of some SAGA-type complexes. Component of the ADA2A-containing complex (ATAC), composed of KAT14, KAT2A, TADA2L, TADA3L, ZZ3, MBIP, WDR5, YEATS2, CCDC101 and DR1. Interacts with (methylated) CGAS. Interacts with TADA3L, GCN5L2, SUPT3H and MYC.

The protein resides in the nucleus. In terms of biological role, chromatin reader component of some histone acetyltransferase (HAT) SAGA-type complexes like the TFTC-HAT, ATAC or STAGA complexes. SGF29 specifically recognizes and binds methylated 'Lys-4' of histone H3 (H3K4me), with a preference for trimethylated form (H3K4me3). In the SAGA-type complexes, SGF29 is required to recruit complexes to H3K4me. Involved in the response to endoplasmic reticulum (ER) stress by recruiting the SAGA complex to H3K4me, thereby promoting histone H3 acetylation and cell survival. Also binds non-histone proteins that are methylated on Lys residues: specifically recognizes and binds CGAS monomethylated on 'Lys-506'. The polypeptide is SAGA-associated factor 29 (Homo sapiens (Human)).